The chain runs to 155 residues: MVKNTNLINISTYKNDVIYFEKEMHEILNNFAKYFKINKQIILDVSIVSSYTSRKLNFEYRQKDKTTDILSFGYDDFDLYDKMPFLNLGELVICNNKIKKQAIIFNHSIKREFLYLFTHGLVHLYGYDHQSEKEKKEMDFIVDSIFNPLKITRND.

The Zn(2+) site is built by H119, H123, and H129.

This sequence belongs to the endoribonuclease YbeY family. Zn(2+) is required as a cofactor.

The protein resides in the cytoplasm. In terms of biological role, single strand-specific metallo-endoribonuclease involved in late-stage 70S ribosome quality control and in maturation of the 3' terminus of the 16S rRNA. This is Endoribonuclease YbeY from Mycoplasmopsis synoviae (strain 53) (Mycoplasma synoviae).